A 299-amino-acid polypeptide reads, in one-letter code: 4-hydroxy-tetrahydrodipicolinate synthase (299 aa).

A pyruvate-binding site is contributed by threonine 47. Catalysis depends on tyrosine 136, which acts as the Proton donor/acceptor. Lysine 164 serves as the catalytic Schiff-base intermediate with substrate. Residue alanine 205 participates in pyruvate binding.

It belongs to the DapA family. As to quaternary structure, homotetramer; dimer of dimers.

It is found in the cytoplasm. The enzyme catalyses L-aspartate 4-semialdehyde + pyruvate = (2S,4S)-4-hydroxy-2,3,4,5-tetrahydrodipicolinate + H2O + H(+). It participates in amino-acid biosynthesis; L-lysine biosynthesis via DAP pathway; (S)-tetrahydrodipicolinate from L-aspartate: step 3/4. Functionally, catalyzes the condensation of (S)-aspartate-beta-semialdehyde [(S)-ASA] and pyruvate to 4-hydroxy-tetrahydrodipicolinate (HTPA). The protein is 4-hydroxy-tetrahydrodipicolinate synthase of Pediococcus pentosaceus (strain ATCC 25745 / CCUG 21536 / LMG 10740 / 183-1w).